Here is an 888-residue protein sequence, read N- to C-terminus: 3-hydroxy-3-methylglutaryl-coenzyme A reductase (888 aa).

Over 1–9 (MLSRLFRMH) the chain is Cytoplasmic. The chain crosses the membrane as a helical span at residues 10–39 (GLFVASHPWEVIVGTVTLTICMMSMNMFTG). At 40 to 56 (NDKICGWNYECPKFEED) the chain is on the lumenal side. A helical membrane pass occupies residues 57–78 (VLSSDIIILTITRCIAILYIYF). The SSD domain maps to 61–218 (DIIILTITRC…MTFFPACVSL (158 aa)). Positions 75–78 (YIYF) match the INSIG-binding motif motif. At 79 to 89 (QFQNLRQLGSK) the chain is on the cytoplasmic side. A Glycyl lysine isopeptide (Lys-Gly) (interchain with G-Cter in ubiquitin) cross-link involves residue Lys-89. Residues 90–114 (YILGIAGLFTIFSSFVFSTVVIHFL) traverse the membrane as a helical segment. The Lumenal segment spans residues 115–123 (DKELTGLNE). The helical transmembrane segment at 124-149 (ALPFFLLLIDLSRASALAKFALSSNS) threads the bilayer. At 150-159 (QDEVRENIAR) the chain is on the cytoplasmic side. Residues 160 to 187 (GMAILGPTFTLDALVECLVIGVGTMSGV) traverse the membrane as a helical segment. Residues 188–191 (RQLE) lie on the Lumenal side of the membrane. The helical transmembrane segment at 192-220 (IMCCFGCMSVLANYFVFMTFFPACVSLVL) threads the bilayer. Residues 221–248 (ELSRESREGRPIWQLSHFARVLEEEENK) lie on the Cytoplasmic side of the membrane. A Glycyl lysine isopeptide (Lys-Gly) (interchain with G-Cter in ubiquitin) cross-link involves residue Lys-248. Residues 249-275 (PNPVTQRVKMIMSLGLVLVHAHSRWIA) traverse the membrane as a helical segment. The Lumenal segment spans residues 276–314 (DPSPQNSTADNSKVSLGLDENVSKRIEPSVSLWQFYLSK). 2 N-linked (GlcNAc...) asparagine glycosylation sites follow: Asn-281 and Asn-296. A helical transmembrane segment spans residues 315–339 (MISMDIEQVITLSLALLLAVKYIFF). Residues 340–888 (EQAETESTLS…LEGACTKKAA (549 aa)) are Cytoplasmic-facing. Active-site charge relay system residues include Glu-559, Lys-691, and Asp-767. The active-site Proton donor is His-866. Ser-872 bears the Phosphoserine; by AMPK mark.

The protein belongs to the HMG-CoA reductase family. Homotetramer. Homodimer. Interacts (via its SSD) with INSIG1; the interaction, accelerated by sterols, leads to the recruitment of HMGCR to AMFR/gp78 for its ubiquitination by the sterol-mediated ERAD pathway. Interacts with UBIAD1. Post-translationally, undergoes sterol-mediated ubiquitination and ER-associated degradation (ERAD). Accumulation of sterols in the endoplasmic reticulum (ER) membrane, triggers binding of the reductase to the ER membrane protein INSIG1 or INSIG2. The INSIG1 binding leads to the recruitment of the ubiquitin ligase, AMFR/gp78, RNF139 or RNF145, initiating ubiquitination of the reductase. The ubiquitinated reductase is then extracted from the ER membrane and delivered to cytosolic 26S proteosomes by a mechanism probably mediated by the ATPase Valosin-containing protein VCP/p97. The INSIG2-binding leads to the recruitment of the ubiquitin ligase RNF139, initiating ubiquitination of the reductase. Lys-248 is the main site of ubiquitination. Ubiquitination is enhanced by the presence of a geranylgeranylated protein. N-glycosylated. Deglycosylated by NGLY1 on release from the endoplasmic reticulum (ER) in a sterol-mediated manner. In terms of processing, phosphorylated. Phosphorylation at Ser-872 reduces the catalytic activity.

The protein resides in the endoplasmic reticulum membrane. The protein localises to the peroxisome membrane. It carries out the reaction (R)-mevalonate + 2 NADP(+) + CoA = (3S)-3-hydroxy-3-methylglutaryl-CoA + 2 NADPH + 2 H(+). The protein operates within metabolic intermediate biosynthesis; (R)-mevalonate biosynthesis; (R)-mevalonate from acetyl-CoA: step 3/3. Regulated by a negative feedback mechanism through sterols and non-sterol metabolites derived from mevalonate. Phosphorylation at Ser-872 down-regulates the catalytic activity. Its function is as follows. Catalyzes the conversion of (3S)-hydroxy-3-methylglutaryl-CoA (HMG-CoA) to mevalonic acid, the rate-limiting step in the synthesis of cholesterol and other isoprenoids, thus plays a critical role in cellular cholesterol homeostasis. In Oryctolagus cuniculus (Rabbit), this protein is 3-hydroxy-3-methylglutaryl-coenzyme A reductase (HMGCR).